We begin with the raw amino-acid sequence, 172 residues long: Shikimate kinase (172 aa).

14–19 (GAGKST) is a binding site for ATP. Ser18 contacts Mg(2+). Positions 36, 60, and 82 each coordinate substrate. Arg120 contributes to the ATP binding site. Residue Arg140 participates in substrate binding.

The protein belongs to the shikimate kinase family. In terms of assembly, monomer. The cofactor is Mg(2+).

The protein resides in the cytoplasm. It catalyses the reaction shikimate + ATP = 3-phosphoshikimate + ADP + H(+). It functions in the pathway metabolic intermediate biosynthesis; chorismate biosynthesis; chorismate from D-erythrose 4-phosphate and phosphoenolpyruvate: step 5/7. Its function is as follows. Catalyzes the specific phosphorylation of the 3-hydroxyl group of shikimic acid using ATP as a cosubstrate. The sequence is that of Shikimate kinase from Tolumonas auensis (strain DSM 9187 / NBRC 110442 / TA 4).